Here is a 572-residue protein sequence, read N- to C-terminus: Proline--tRNA ligase (572 aa).

Belongs to the class-II aminoacyl-tRNA synthetase family. ProS type 1 subfamily. In terms of assembly, homodimer.

It is found in the cytoplasm. The enzyme catalyses tRNA(Pro) + L-proline + ATP = L-prolyl-tRNA(Pro) + AMP + diphosphate. Functionally, catalyzes the attachment of proline to tRNA(Pro) in a two-step reaction: proline is first activated by ATP to form Pro-AMP and then transferred to the acceptor end of tRNA(Pro). As ProRS can inadvertently accommodate and process non-cognate amino acids such as alanine and cysteine, to avoid such errors it has two additional distinct editing activities against alanine. One activity is designated as 'pretransfer' editing and involves the tRNA(Pro)-independent hydrolysis of activated Ala-AMP. The other activity is designated 'posttransfer' editing and involves deacylation of mischarged Ala-tRNA(Pro). The misacylated Cys-tRNA(Pro) is not edited by ProRS. In Dichelobacter nodosus (strain VCS1703A), this protein is Proline--tRNA ligase.